We begin with the raw amino-acid sequence, 261 residues long: uncharacterized protein (261 aa).

Positions 43, 45, 75, 106, 197, and 199 each coordinate a divalent metal cation.

Belongs to the metallophosphoesterase superfamily. The cofactor is a divalent metal cation.

This is an uncharacterized protein from Aquifex aeolicus (strain VF5).